Here is a 139-residue protein sequence, read N- to C-terminus: Autophagy-related protein 31 (139 aa).

Belongs to the ATG31 family. As to quaternary structure, forms a stable complex with ATG17 and ATG29. Interacts directly with ATG29. The ATG17-ATG29-ATG31 complex interacts with the ATG1-ATG13 complex. Note=The interaction with the ATG1-ATG13 complex is induced by starvation.

It localises to the preautophagosomal structure. In terms of biological role, plays a role in starvation-induced autophagy. Involved in mitophagy. Functions with ATG17 and ATG29 at the preautophagosomal structure (PAS) in order to form normal autophagosomes under starvation conditions. The protein is Autophagy-related protein 31 of Kluyveromyces marxianus (strain DMKU3-1042 / BCC 29191 / NBRC 104275) (Yeast).